The chain runs to 129 residues: Cocaine- and amphetamine-regulated transcript protein (129 aa).

The signal sequence occupies residues 1–27 (MESSRLRLLPLLGAALLLLLPLLGARA). Phosphotyrosine is present on Tyr41. A Phosphoserine modification is found at Ser48. 3 disulfide bridges follow: Cys95–Cys113, Cys101–Cys121, and Cys115–Cys128.

Belongs to the CART family.

Its subcellular location is the secreted. Functionally, satiety factor closely associated with the actions of leptin and neuropeptide y; this anorectic peptide inhibits both normal and starvation-induced feeding and completely blocks the feeding response induced by neuropeptide Y and regulated by leptin in the hypothalamus. In Mus musculus (Mouse), this protein is Cocaine- and amphetamine-regulated transcript protein (Cartpt).